The chain runs to 275 residues: MRGEGIRARKALGQNFLVDRHVLARIADIVDMRPDDRILEVGPGKGALTEMLAHRCARLVAVELDTRLVPVLRQAFRDNPRVEIVHGDILEIDLRDLLAYEGGERWKVAANLPYNISTPVLFAFLDNRDLFSRLVLMLQKEVGDRLAASPGTKDYGILSVFFQLHFDVTREMIVRPGSFHPVPKVDSAVLSFVPLEKPRVAVGDEQYFRRLVKGAFSMRRKTLWNCLKNAGLGLSGEQLSEALAVCGIEPGRRGETLSLDEFAALSRAMMALGGK.

S-adenosyl-L-methionine-binding residues include Asn-15, Leu-17, Gly-42, Glu-63, Asp-88, and Asn-111.

Belongs to the class I-like SAM-binding methyltransferase superfamily. rRNA adenine N(6)-methyltransferase family. RsmA subfamily.

The protein resides in the cytoplasm. The catalysed reaction is adenosine(1518)/adenosine(1519) in 16S rRNA + 4 S-adenosyl-L-methionine = N(6)-dimethyladenosine(1518)/N(6)-dimethyladenosine(1519) in 16S rRNA + 4 S-adenosyl-L-homocysteine + 4 H(+). In terms of biological role, specifically dimethylates two adjacent adenosines (A1518 and A1519) in the loop of a conserved hairpin near the 3'-end of 16S rRNA in the 30S particle. May play a critical role in biogenesis of 30S subunits. The sequence is that of Ribosomal RNA small subunit methyltransferase A from Geobacter metallireducens (strain ATCC 53774 / DSM 7210 / GS-15).